The following is a 57-amino-acid chain: Potassium channel toxin alpha-KTx 8.5 (57 aa).

The signal sequence occupies residues 1 to 28; it reads MSRLYAIILIALVLNVIMTIMPDSKVEA. Disulfide bonds link Cys31-Cys47, Cys34-Cys52, and Cys38-Cys54.

Belongs to the short scorpion toxin superfamily. Potassium channel inhibitor family. Alpha-KTx 08 subfamily. As to expression, expressed by the venom gland.

Its subcellular location is the secreted. Selectively inhibits voltage-gated potassium channels Kv1.2/KCNA2 (IC(50)=183 nM). The chain is Potassium channel toxin alpha-KTx 8.5 from Odontobuthus doriae (Yellow Iranian scorpion).